A 983-amino-acid polypeptide reads, in one-letter code: Protein translocase subunit SecA (983 aa).

ATP contacts are provided by residues Q83, 101–105 (GEGKT), and D489. Positions 948-983 (ISSEEEDNNEKTNINNNEDLERTKGEAQQTAKNPNE) are disordered. Over residues 973–983 (EAQQTAKNPNE) the composition is skewed to polar residues.

This sequence belongs to the SecA family. In terms of assembly, monomer and homodimer. Part of the essential Sec protein translocation apparatus which comprises SecA, SecYEG and auxiliary proteins SecDF. Other proteins may also be involved.

Its subcellular location is the cell membrane. It is found in the cytoplasm. The catalysed reaction is ATP + H2O + cellular proteinSide 1 = ADP + phosphate + cellular proteinSide 2.. Functionally, part of the Sec protein translocase complex. Interacts with the SecYEG preprotein conducting channel. Has a central role in coupling the hydrolysis of ATP to the transfer of proteins into and across the cell membrane, serving as an ATP-driven molecular motor driving the stepwise translocation of polypeptide chains across the membrane. The protein is Protein translocase subunit SecA of Mesomycoplasma hyopneumoniae (strain J / ATCC 25934 / NCTC 10110) (Mycoplasma hyopneumoniae).